The chain runs to 207 residues: Peptidyl-tRNA hydrolase (207 aa).

Y19 contacts tRNA. The active-site Proton acceptor is the H24. TRNA-binding residues include F70, N72, and N118.

Belongs to the PTH family. In terms of assembly, monomer.

It localises to the cytoplasm. The enzyme catalyses an N-acyl-L-alpha-aminoacyl-tRNA + H2O = an N-acyl-L-amino acid + a tRNA + H(+). In terms of biological role, hydrolyzes ribosome-free peptidyl-tRNAs (with 1 or more amino acids incorporated), which drop off the ribosome during protein synthesis, or as a result of ribosome stalling. Its function is as follows. Catalyzes the release of premature peptidyl moieties from peptidyl-tRNA molecules trapped in stalled 50S ribosomal subunits, and thus maintains levels of free tRNAs and 50S ribosomes. This Synechococcus sp. (strain CC9311) protein is Peptidyl-tRNA hydrolase.